We begin with the raw amino-acid sequence, 200 residues long: ATP-dependent Clp protease proteolytic subunit (200 aa).

Ser98 functions as the Nucleophile in the catalytic mechanism. His123 is a catalytic residue.

Belongs to the peptidase S14 family. As to quaternary structure, fourteen ClpP subunits assemble into 2 heptameric rings which stack back to back to give a disk-like structure with a central cavity, resembling the structure of eukaryotic proteasomes.

The protein localises to the cytoplasm. It carries out the reaction Hydrolysis of proteins to small peptides in the presence of ATP and magnesium. alpha-casein is the usual test substrate. In the absence of ATP, only oligopeptides shorter than five residues are hydrolyzed (such as succinyl-Leu-Tyr-|-NHMec, and Leu-Tyr-Leu-|-Tyr-Trp, in which cleavage of the -Tyr-|-Leu- and -Tyr-|-Trp bonds also occurs).. In terms of biological role, cleaves peptides in various proteins in a process that requires ATP hydrolysis. Has a chymotrypsin-like activity. Plays a major role in the degradation of misfolded proteins. The sequence is that of ATP-dependent Clp protease proteolytic subunit from Deinococcus geothermalis (strain DSM 11300 / CIP 105573 / AG-3a).